The following is a 259-amino-acid chain: Hydroxyacylglutathione hydrolase (259 aa).

H56, H58, D60, H61, H112, D133, and H171 together coordinate Zn(2+).

It belongs to the metallo-beta-lactamase superfamily. Glyoxalase II family. In terms of assembly, monomer. The cofactor is Zn(2+).

The enzyme catalyses an S-(2-hydroxyacyl)glutathione + H2O = a 2-hydroxy carboxylate + glutathione + H(+). Its pathway is secondary metabolite metabolism; methylglyoxal degradation; (R)-lactate from methylglyoxal: step 2/2. Its function is as follows. Thiolesterase that catalyzes the hydrolysis of S-D-lactoyl-glutathione to form glutathione and D-lactic acid. The polypeptide is Hydroxyacylglutathione hydrolase (Pseudomonas putida (strain ATCC 47054 / DSM 6125 / CFBP 8728 / NCIMB 11950 / KT2440)).